The sequence spans 367 residues: Putative F-box protein At3g21120 (367 aa).

Positions 1–43 constitute an F-box domain; that stretch reads MHLPEDLVLEILSKVPAVSLARFRSTCRRWNALVVDGSFAKKH.

This Arabidopsis thaliana (Mouse-ear cress) protein is Putative F-box protein At3g21120.